The sequence spans 576 residues: Putative diflavin flavoprotein A 1 (576 aa).

The segment at 48 to 240 (RNGTTYNSFL…LAIKTVATGH (193 aa)) is zinc metallo-hydrolase. Residues histidine 97, glutamate 99, aspartate 101, histidine 164, aspartate 183, and histidine 240 each contribute to the Fe cation site. In terms of domain architecture, Flavodoxin-like spans 269–431 (VALFYAEDYG…DLEKALGRIS (163 aa)). Residues 432–576 (TGLYIITTKK…VHHRKVGNHY (145 aa)) form a flavodoxin-reductase-like region.

In the N-terminal section; belongs to the zinc metallo-hydrolase group 3 family. This sequence in the C-terminal section; belongs to the flavodoxin reductase family. Requires Fe cation as cofactor.

Its function is as follows. Mediates electron transfer from NADH to oxygen, reducing it to water. This modular protein has 3 redox cofactors, in other organisms the same activity requires 2 or 3 proteins. The sequence is that of Putative diflavin flavoprotein A 1 (dfa1) from Nostoc sp. (strain PCC 7120 / SAG 25.82 / UTEX 2576).